The following is a 101-amino-acid chain: Large ribosomal subunit protein uL24 (101 aa).

The protein belongs to the universal ribosomal protein uL24 family. In terms of assembly, part of the 50S ribosomal subunit.

In terms of biological role, one of two assembly initiator proteins, it binds directly to the 5'-end of the 23S rRNA, where it nucleates assembly of the 50S subunit. Its function is as follows. One of the proteins that surrounds the polypeptide exit tunnel on the outside of the subunit. The polypeptide is Large ribosomal subunit protein uL24 (Borrelia recurrentis (strain A1)).